The primary structure comprises 146 residues: Hemoglobin subunit beta (146 aa).

N-acetylvaline is present on valine 1. The Globin domain maps to 2-146; sequence HLTNEEKTAV…VATALAHKYH (145 aa). Serine 44 is subject to Phosphoserine. An N6-acetyllysine modification is found at lysine 59. Histidine 63 lines the heme b pocket. The residue at position 82 (lysine 82) is an N6-acetyllysine. Histidine 92 provides a ligand contact to heme b. Cysteine 93 carries the post-translational modification S-nitrosocysteine. Lysine 144 is modified (N6-acetyllysine).

Belongs to the globin family. In terms of assembly, heterotetramer of two alpha chains and two beta chains. Red blood cells.

Its function is as follows. Involved in oxygen transport from the lung to the various peripheral tissues. This Lyroderma lyra (Greater Asian false-vampire bat) protein is Hemoglobin subunit beta (HBB).